We begin with the raw amino-acid sequence, 371 residues long: Putative transport protein YtvI (371 aa).

Transmembrane regions (helical) follow at residues 6 to 26 (ITIF…IAAA), 30 to 50 (FPLT…HPVV), 65 to 85 (VLGV…ILVA), 168 to 188 (FFAL…ATFF), 225 to 245 (GFIK…FIGL), 256 to 276 (IAFL…SVFV), 283 to 303 (SITG…VVLI), 312 to 332 (ILSK…FAGF), and 334 to 354 (LFGF…QAFI).

This sequence belongs to the autoinducer-2 exporter (AI-2E) (TC 2.A.86) family.

The protein localises to the cell membrane. The polypeptide is Putative transport protein YtvI (ytvI) (Bacillus subtilis (strain 168)).